A 291-amino-acid chain; its full sequence is Probable cell wall amidase LytH (291 aa).

An N-terminal signal peptide occupies residues 1–40 (MKKIDSWLTKHGLKNRLTLVVIVIFIIFLILLFMFVNLSD). An SH3b domain is found at 41–105 (EDTGQITITE…WVAGWHTNLN (65 aa)). The 165-residue stretch at 122–286 (IVLDPGHGGS…VEQAIVDGLK (165 aa)) folds into the MurNAc-LAA domain. The tract at residues 123–147 (VLDPGHGGSDQGASSSTPSKSLEKN) is disordered. Polar residues predominate over residues 133–142 (QGASSSTPSK).

This sequence belongs to the N-acetylmuramoyl-L-alanine amidase 3 family.

It is found in the secreted. In terms of biological role, probably involved in cell-wall metabolism. In Staphylococcus epidermidis (strain ATCC 12228 / FDA PCI 1200), this protein is Probable cell wall amidase LytH (lytH).